A 335-amino-acid chain; its full sequence is Malate dehydrogenase (335 aa).

NAD(+) is bound at residue 11–17 (GAAGQIG). 2 residues coordinate substrate: Arg94 and Arg100. NAD(+) contacts are provided by residues Asn107, Gln114, and 131-133 (VGN). Positions 133 and 167 each coordinate substrate. Residue His192 is the Proton acceptor of the active site.

It belongs to the LDH/MDH superfamily. MDH type 2 family.

The catalysed reaction is (S)-malate + NAD(+) = oxaloacetate + NADH + H(+). In terms of biological role, catalyzes the reversible oxidation of malate to oxaloacetate. This Bdellovibrio bacteriovorus (strain ATCC 15356 / DSM 50701 / NCIMB 9529 / HD100) protein is Malate dehydrogenase.